A 344-amino-acid chain; its full sequence is Acireductone dioxygenase (344 aa).

The Fe(2+) site is built by histidine 92, histidine 94, glutamate 98, and histidine 137. Positions 92, 94, 98, and 137 each coordinate Ni(2+).

The protein belongs to the acireductone dioxygenase (ARD) family. Fe(2+) is required as a cofactor. It depends on Ni(2+) as a cofactor.

The protein resides in the cytoplasm. It localises to the nucleus. It catalyses the reaction 1,2-dihydroxy-5-(methylsulfanyl)pent-1-en-3-one + O2 = 4-methylsulfanyl-2-oxobutanoate + formate + 2 H(+). The enzyme catalyses 1,2-dihydroxy-5-(methylsulfanyl)pent-1-en-3-one + O2 = 3-(methylsulfanyl)propanoate + CO + formate + 2 H(+). It participates in amino-acid biosynthesis; L-methionine biosynthesis via salvage pathway; L-methionine from S-methyl-5-thio-alpha-D-ribose 1-phosphate: step 5/6. Catalyzes 2 different reactions between oxygen and the acireductone 1,2-dihydroxy-3-keto-5-methylthiopentene (DHK-MTPene) depending upon the metal bound in the active site. Fe-containing acireductone dioxygenase (Fe-ARD) produces formate and 2-keto-4-methylthiobutyrate (KMTB), the alpha-ketoacid precursor of methionine in the methionine recycle pathway. Ni-containing acireductone dioxygenase (Ni-ARD) produces methylthiopropionate, carbon monoxide and formate, and does not lie on the methionine recycle pathway. The protein is Acireductone dioxygenase of Leishmania infantum.